A 275-amino-acid polypeptide reads, in one-letter code: Phosphonoacetaldehyde hydrolase (275 aa).

Aspartate 15 (nucleophile) is an active-site residue. Aspartate 15 and alanine 17 together coordinate Mg(2+). Lysine 56 (schiff-base intermediate with substrate) is an active-site residue. Position 189 (aspartate 189) interacts with Mg(2+).

It belongs to the HAD-like hydrolase superfamily. PhnX family. In terms of assembly, homodimer. Requires Mg(2+) as cofactor.

The catalysed reaction is phosphonoacetaldehyde + H2O = acetaldehyde + phosphate + H(+). Its function is as follows. Involved in phosphonate degradation. The protein is Phosphonoacetaldehyde hydrolase of Pseudomonas paraeruginosa (strain DSM 24068 / PA7) (Pseudomonas aeruginosa (strain PA7)).